The primary structure comprises 100 residues: Small ribosomal subunit protein uS14c (100 aa).

It belongs to the universal ribosomal protein uS14 family. In terms of assembly, part of the 30S ribosomal subunit.

The protein resides in the plastid. It is found in the chloroplast. Functionally, binds 16S rRNA, required for the assembly of 30S particles. This Coffea arabica (Arabian coffee) protein is Small ribosomal subunit protein uS14c.